A 160-amino-acid polypeptide reads, in one-letter code: Cyanate hydratase (160 aa).

Residues Arg-100, Glu-103, and Ser-126 contribute to the active site.

It belongs to the cyanase family.

It catalyses the reaction cyanate + hydrogencarbonate + 3 H(+) = NH4(+) + 2 CO2. Its function is as follows. Catalyzes the reaction of cyanate with bicarbonate to produce ammonia and carbon dioxide. The chain is Cyanate hydratase from Aspergillus niger (strain ATCC MYA-4892 / CBS 513.88 / FGSC A1513).